The primary structure comprises 628 residues: Hepatocyte nuclear factor 1-alpha (628 aa).

The tract at residues 1-31 (MVSKLSQLQTELLAALLESGLSKEALIQALG) is dimerization. In terms of domain architecture, HNF-p1 spans 1-32 (MVSKLSQLQTELLAALLESGLSKEALIQALGE). The interval 47-79 (GESCGGTRGDLTELPNGLGETRGSEDDTDDDGE) is disordered. Residue Ser-70 is modified to Phosphoserine. Thr-74 bears the Phosphothreonine mark. Residues 87–182 (KELENLSPEE…VAQQFTHAGQ (96 aa)) enclose the POU-specific atypical domain. Ser-93 bears the Phosphoserine mark. Lys-117 participates in a covalent cross-link: Glycyl lysine isopeptide (Lys-Gly) (interchain with G-Cter in ubiquitin). 4 interaction with DNA regions span residues 130-132 (QRE), 143-149 (HLSQHLN), 155-158 (KTQK), and 203-206 (RFKW). Residues 183–205 (GGLIEEPTGDELPTKKGRRNRFK) form a disordered region. The Nuclear localization signal signature appears at 197–205 (KKGRRNRFK). A DNA-binding region (homeobox; HNF1-type) is located at residues 199–279 (GRRNRFKWGP…NRRKEEAFRH (81 aa)). Ser-247 is modified (phosphoserine). Interaction with DNA stretches follow at residues 263–265 (RVY) and 270–273 (NRRK). 2 disordered regions span residues 284–338 (DTYN…SSSG) and 541–585 (FTSD…LSTS). Pro residues predominate over residues 288-298 (GPPPGPGPGPA). The residue at position 313 (Ser-313) is a Phosphoserine. 2 stretches are compositionally biased toward polar residues: residues 324–338 (QSAT…SSSG) and 558–575 (SPAT…NIQH).

The protein belongs to the HNF1 homeobox family. Binds DNA as a dimer. Heterotetramer with PCBD1; formed by a dimer of dimers. Interacts with PCBD1. Interacts with BHLHE41. Interacts with NR5A2. Interacts with SPOP; this interaction promotes ubiquitination and degradation of HNF1A. In terms of processing, ubiquitinated in s SPOP-dependent manner; leading to prteasomal degradation. In terms of tissue distribution, liver.

The protein resides in the nucleus. Transcriptional activator that regulates the tissue specific expression of multiple genes, especially in pancreatic islet cells and in liver. Binds to the inverted palindrome 5'-GTTAATNATTAAC-3'. Activates the transcription of CYP1A2, CYP2E1 and CYP3A11. This Rattus norvegicus (Rat) protein is Hepatocyte nuclear factor 1-alpha (Hnf1a).